We begin with the raw amino-acid sequence, 1955 residues long: Protocadherin-15 (1955 aa).

The first 26 residues, 1–26, serve as a signal peptide directing secretion; the sequence is MFRQFYLWTCLASGIILGSLFEICLG. Residues 27–1376 are Extracellular-facing; sequence QYDDDCKLAR…GESLGYTEGA (1350 aa). Cysteines 32 and 120 form a disulfide. Cadherin domains are found at residues 40–147, 148–265, 278–395, 396–509, 510–616, 617–717, 719–819, 820–926, 927–1035, 1037–1144, and 1145–1259; these read PATI…SPTF, KHES…GPMF, RPLT…SPYF, TMPS…TPTF, PEIS…PPRF, PQLM…APVF, PYLP…SPVF, TNST…PPVF, SKRI…IPRF, QEEY…PPVF, and QKKF…PPTL. 3 N-linked (GlcNAc...) asparagine glycosylation sites follow: N52, N97, and N201. N-linked (GlcNAc...) asparagine glycosylation is found at N419, N559, N662, N724, N768, N821, and N851. N-linked (GlcNAc...) asparagine glycosylation is found at N1064, N1084, and N1175. The chain crosses the membrane as a helical span at residues 1377–1397; it reads LLALAFIIILCCIPAILVVLV. Topologically, residues 1398–1955 are cytoplasmic; sequence SYRQFKVRQA…KQSHSQSTSL (558 aa). A compositionally biased stretch (pro residues) spans 1426–1444; it reads VPAPAPVAAPPPPPPPPPG. Disordered stretches follow at residues 1426–1446, 1601–1623, 1745–1766, and 1928–1955; these read VPAP…PGAH, QGTR…GSSN, CPLP…APLA, and ITSE…STSL. Residues 1928-1941 show a composition bias toward polar residues; it reads ITSEQNKGSLNNIV.

In terms of assembly, antiparallel heterodimer with CDH23. Found in a complex with TMIE and LHFPL5. Interacts with LHFPL5/TMHS; this interaction is required for efficient localization to hair bundles. Interacts with MYO7A. Interacts with USH1G; this interaction may recruit USH1G to the plasma membrane. Interacts with TOMT. Isoforms CD1 and CD3 interact with TMC1 (via N-terminus) and TMC2 (via N-terminus). In terms of tissue distribution, expressed in brain, lung, kidney, spleen and testis. Found also in the inner and outer synaptic layers, and the nerve fiber layer in adult and fetal retinas. Found in the supporting cells, outer sulcus cells and spiral ganglion of fetal cochlea. Expressed in cytotoxic tumor-derived T- and NK-cell lines as well as biopsies of nasal NK/T-cell lymphomas. Not detected in normal or in vitro activated peripheral blood cells, CD4 or CD8 lymphocytes or NK cells. Isoform 3 is expressed in brain, heart, cerebellum and kidney. CD1 isoforms, such as isoform 1, have a limited pattern of expression and is detected in testis, retina and cochlea. CD2 isoforms, such as isoforms 4 and 5, are expressed in heart, kidney, thymus, spleen, testis, retina and cochlea. CD3 isoforms, such as isoform 6, are widely expressed.

It is found in the cell membrane. The protein resides in the secreted. Calcium-dependent cell-adhesion protein. Essential for maintenance of normal retinal and cochlear function. This chain is Protocadherin-15 (PCDH15), found in Homo sapiens (Human).